A 340-amino-acid polypeptide reads, in one-letter code: Putative cystathionine beta-lyase (340 aa).

Lysine 208 carries the N6-(pyridoxal phosphate)lysine modification.

It belongs to the trans-sulfuration enzymes family. Pyridoxal 5'-phosphate is required as a cofactor.

The enzyme catalyses L,L-cystathionine + H2O = L-homocysteine + pyruvate + NH4(+). It carries out the reaction an S-substituted L-cysteine + H2O = a thiol + pyruvate + NH4(+). It functions in the pathway amino-acid biosynthesis; L-methionine biosynthesis via de novo pathway; L-homocysteine from L-cystathionine: step 1/1. The polypeptide is Putative cystathionine beta-lyase (IRC7) (Saccharomyces cerevisiae (strain ATCC 204508 / S288c) (Baker's yeast)).